The chain runs to 215 residues: ATP-dependent dethiobiotin synthetase BioD (215 aa).

13 to 18 (DIGKTI) contacts ATP. A Mg(2+)-binding site is contributed by T17. K38 is an active-site residue. T42 lines the substrate pocket. Residues D50, 115–118 (EGAG), and 175–176 (NH) each bind ATP. Mg(2+) contacts are provided by D50 and E115.

It belongs to the dethiobiotin synthetase family. As to quaternary structure, homodimer. Requires Mg(2+) as cofactor.

Its subcellular location is the cytoplasm. The enzyme catalyses (7R,8S)-7,8-diammoniononanoate + CO2 + ATP = (4R,5S)-dethiobiotin + ADP + phosphate + 3 H(+). The protein operates within cofactor biosynthesis; biotin biosynthesis; biotin from 7,8-diaminononanoate: step 1/2. Its function is as follows. Catalyzes a mechanistically unusual reaction, the ATP-dependent insertion of CO2 between the N7 and N8 nitrogen atoms of 7,8-diaminopelargonic acid (DAPA, also called 7,8-diammoniononanoate) to form a ureido ring. The protein is ATP-dependent dethiobiotin synthetase BioD of Neisseria meningitidis serogroup A / serotype 4A (strain DSM 15465 / Z2491).